Consider the following 874-residue polypeptide: DNA mismatch repair protein MutS (874 aa).

The span at Met1–Ala12 shows a compositional bias: basic and acidic residues. The interval Met1–Gly20 is disordered. Gly661–Ser668 provides a ligand contact to ATP. The tract at residues Arg854–Phe874 is disordered.

The protein belongs to the DNA mismatch repair MutS family.

Functionally, this protein is involved in the repair of mismatches in DNA. It is possible that it carries out the mismatch recognition step. This protein has a weak ATPase activity. This chain is DNA mismatch repair protein MutS, found in Thermosynechococcus vestitus (strain NIES-2133 / IAM M-273 / BP-1).